A 333-amino-acid chain; its full sequence is Probable endo-beta-1,4-glucanase B (333 aa).

A signal peptide spans M1–A17. Residues N37 and N100 are each glycosylated (N-linked (GlcNAc...) asparagine). The active-site Proton donor is E160. The Nucleophile role is filled by E267.

The protein belongs to the glycosyl hydrolase 5 (cellulase A) family.

It localises to the secreted. It carries out the reaction Endohydrolysis of (1-&gt;4)-beta-D-glucosidic linkages in cellulose, lichenin and cereal beta-D-glucans.. Has endoglucanase activity on substrates containing beta-1,4 glycosidic bonds, like in carboxymethylcellulose (CMC), hydroxyethylcellulose (HEC) and beta-glucan. Involved in the degradation of complex natural cellulosic substrates. The chain is Probable endo-beta-1,4-glucanase B (eglB) from Aspergillus oryzae (strain ATCC 42149 / RIB 40) (Yellow koji mold).